The sequence spans 473 residues: Monocarboxylate transporter 4 (473 aa).

Over 1–17 (MGAVVVDDGPSGVKAPD) the chain is Cytoplasmic. A helical transmembrane segment spans residues 18-38 (GGWGWAVLFGCFIITGFSYAF). The Extracellular portion of the chain corresponds to 39 to 61 (PKAVSVFFKELIREFGVGYSDTA). The helical transmembrane segment at 62-82 (WISSILLAMLYGTGPLCSVCV) threads the bilayer. Residues 83–91 (NRFGCRPVM) lie on the Cytoplasmic side of the membrane. Residues 92-112 (LVGGLFASMGMVIASFCTSIV) form a helical membrane-spanning segment. Over 113-115 (QIY) the chain is Extracellular. Residues 116-136 (LTAGVITGLGLALNFQPSLIM) traverse the membrane as a helical segment. The Cytoplasmic segment spans residues 137–149 (LNRYFDKRRPLAN). A helical membrane pass occupies residues 150–170 (GLSAAGSPVFLCALSPLGQIL). Over 171–179 (QHEYGWRGG) the chain is Extracellular. The helical transmembrane segment at 180 to 200 (FLILGGMLLNCCVCGALMRPL) threads the bilayer. Over 201–231 (EPPKKSEATKEPAEKKAKKKLLDFSVFKDGG) the chain is Cytoplasmic. The chain crosses the membrane as a helical span at residues 232-252 (FVIYTLAASIMVLGLFVPPVF). Over 253–268 (VVSYAKDLGYQDTKAA) the chain is Extracellular. A helical membrane pass occupies residues 269-289 (FLLTILGFIDIFARPICGMVA). Residues 290–297 (GLKWVRPR) are Cytoplasmic-facing. A helical transmembrane segment spans residues 298-318 (CVYLFSFAMIFNGFTDLMGSM). Residues 319 to 321 (SVD) are Extracellular-facing. A helical transmembrane segment spans residues 322–342 (YGGLVVFCIFFGISYGMVGAL). Topologically, residues 343–358 (QFEVLMAIVGTQKFSS) are cytoplasmic. Residues 359–379 (AIGLVLLAEAMAVLIGPPSAG) traverse the membrane as a helical segment. At 380–388 (KLLDLTRRY) the chain is on the extracellular side. A helical transmembrane segment spans residues 389 to 409 (MFVFIIAGIEVTTSALVLALG). The Cytoplasmic portion of the chain corresponds to 410-473 (NFFCIKKKPA…EVVTNPETCV (64 aa)). Residues 421-447 (PHTKEAAAEREELNKSEDKTPEDAKVD) are disordered. Basolateral sorting signal stretches follow at residues 427-449 (AAEREELNKSEDKTPEDAKVDSI) and 449-473 (IEVEQFLKDEPEKNGEVVTNPETCV).

This sequence belongs to the major facilitator superfamily. Monocarboxylate porter (TC 2.A.1.13) family. Interacts with BSG; interaction mediates SLC16A3 targeting to the plasma membrane.

Its subcellular location is the cell membrane. It is found in the basolateral cell membrane. It carries out the reaction (S)-lactate(in) + H(+)(in) = (S)-lactate(out) + H(+)(out). The catalysed reaction is pyruvate(out) + H(+)(out) = pyruvate(in) + H(+)(in). Proton-dependent transporter of monocarboxylates such as L-lactate and pyruvate. Plays a predominant role in the L-lactate efflux from highly glycolytic cells. The protein is Monocarboxylate transporter 4 (SLC16A3) of Gallus gallus (Chicken).